The chain runs to 318 residues: Nitrate reductase [NADH] (318 aa).

The 76-residue stretch at A216 to A291 folds into the Cytochrome b5 heme-binding domain. 2 residues coordinate heme: H251 and H274.

This sequence belongs to the nitrate reductase family. Homodimer. It depends on FAD as a cofactor. Heme serves as cofactor. The cofactor is Mo-molybdopterin.

It catalyses the reaction nitrite + NAD(+) + H2O = nitrate + NADH + H(+). Functionally, nitrate reductase is a key enzyme involved in the first step of nitrate assimilation in plants, fungi and bacteria. This chain is Nitrate reductase [NADH], found in Chlorella vulgaris (Green alga).